The following is a 213-amino-acid chain: Superoxide dismutase [Mn] (213 aa).

Residues H27, H82, D168, and H172 each contribute to the Mn(2+) site.

It belongs to the iron/manganese superoxide dismutase family. Homodimer. Mn(2+) is required as a cofactor.

The catalysed reaction is 2 superoxide + 2 H(+) = H2O2 + O2. Destroys superoxide anion radicals which are normally produced within the cells and which are toxic to biological systems. The chain is Superoxide dismutase [Mn] (sodA) from Mannheimia haemolytica (Pasteurella haemolytica).